The chain runs to 381 residues: tRNA N6-adenosine threonylcarbamoyltransferase (381 aa).

Fe cation-binding residues include H114 and H118. Substrate is bound by residues 142 to 146, D178, G191, D195, and N321; that span reads VVSGG. Residue D349 coordinates Fe cation.

This sequence belongs to the KAE1 / TsaD family. Fe(2+) serves as cofactor.

The protein resides in the cytoplasm. The enzyme catalyses L-threonylcarbamoyladenylate + adenosine(37) in tRNA = N(6)-L-threonylcarbamoyladenosine(37) in tRNA + AMP + H(+). Its function is as follows. Required for the formation of a threonylcarbamoyl group on adenosine at position 37 (t(6)A37) in tRNAs that read codons beginning with adenine. Is involved in the transfer of the threonylcarbamoyl moiety of threonylcarbamoyl-AMP (TC-AMP) to the N6 group of A37, together with TsaE and TsaB. TsaD likely plays a direct catalytic role in this reaction. The chain is tRNA N6-adenosine threonylcarbamoyltransferase from Koribacter versatilis (strain Ellin345).